The primary structure comprises 94 residues: Small ubiquitin-related modifier 3 (94 aa).

A Glycyl lysine isopeptide (Lys-Gly) (interchain with G-Cter in SUMO) cross-link involves residue Lys11. Positions 15-92 constitute a Ubiquitin-like domain; the sequence is DHINLKVAGQ…IDVFQQQTGG (78 aa). Gly92 participates in a covalent cross-link: Glycyl lysine isopeptide (Gly-Lys) (interchain with K-? in acceptor proteins). The propeptide occupies 93–94; sequence LC.

This sequence belongs to the ubiquitin family. SUMO subfamily. In terms of assembly, interacts with SAE2 and UBE2I. Covalently attached to a number of proteins. Post-translationally, polymeric chains can be formed through Lys-11 cross-linking. In terms of processing, cleavage of precursor form by a sentrin-specific protease is necessary for function.

It localises to the cytoplasm. The protein localises to the nucleus. Its subcellular location is the PML body. In terms of biological role, ubiquitin-like protein which can be covalently attached to target lysines either as a monomer or as a lysine-linked polymer. Does not seem to be involved in protein degradation and may function as an antagonist of ubiquitin in the degradation process. Plays a role in a number of cellular processes such as nuclear transport, DNA replication and repair, mitosis and signal transduction. Covalent attachment to its substrates requires prior activation by the E1 complex SAE1-SAE2 and linkage to the E2 enzyme UBE2I. This chain is Small ubiquitin-related modifier 3, found in Gallus gallus (Chicken).